We begin with the raw amino-acid sequence, 31 residues long: MSDIN-like toxin proprotein 8 (31 aa).

The propeptide occupies 1–10; that stretch reads MSDINTARLP. A cross-link (cyclopeptide (Cys-Pro)) is located at residues 11–18; it reads CIGFLGIP. Residues 19 to 31 constitute a propeptide that is removed on maturation; it reads SVGDDIEMVLRHG.

Belongs to the MSDIN fungal toxin family. Post-translationally, processed by the macrocyclase-peptidase enzyme POPB to yield a toxic cyclic octapeptide. POPB first removes 10 residues from the N-terminus. Conformational trapping of the remaining peptide forces the enzyme to release this intermediate rather than proceed to macrocyclization. The enzyme rebinds the remaining peptide in a different conformation and catalyzes macrocyclization of the N-terminal 8 residues.

Its function is as follows. Probable toxin that belongs to the MSDIN-like toxin family responsible for a large number of food poisoning cases and deaths. The polypeptide is MSDIN-like toxin proprotein 8 (Amanita bisporigera (Destroying angel)).